We begin with the raw amino-acid sequence, 2365 residues long: MEEVPGDALCEHFEANILTQNRCQNCFHPEEAHGARYQELRSPSGAEVPYCDLPRCPPAPEDPLSASTSGCQSVVDPGLRPGPKRGPSPSAGLPEEGPTAAPRSRSRELEAVPYLEGLTTSLCGSCNEDPGSDPTSSPDSATPDDTSNSSSVDWDTVERQEEEAPSWDELAVMIPRRPREGPRADSSQRAPSLLTRSPVGGDAAGQKKEDTGGGGRSAGQHWARLRGESGLSLERHRSTLTQASSMTPHSGPRSTTSQASPAQRDTAQAASTREIPRASSPHRITQRDTSRASSTQQEISRASSTQQETSRASSTQEDTPRASSTQEDTPRASSTQWNTPRASSPSRSTQLDNPRTSSTQQDNPQTSFPTCTPQRENPRTPCVQQDDPRASSPNRTTQRENSRTSCAQRDNPKASRTSSPNRATRDNPRTSCAQRDNPRASSPSRATRDNPTTSCAQRDNPRASRTSSPNRATRDNPRTSCAQRDNPRASSPSRATRDNPTTSCAQRDNPRASRTSSPNRATRDNPRTSCAQRDNPRASSPNRAARDNPTTSCAQRDNPRASRTSSPNRATRDNPRTSCAQRDNPRASSPNRATRDNPTTSCAQRDNPRASRTSSPNRATRDNPRTSCAQRDNPRASSPNRTTQQDSPRTSCARRDDPRASSPNRTIQQENPRTSCALRDNPRASSPSRTIQQENPRTSCAQRDDPRASSPNRTTQQENPRTSCARRDNPRASSRNRTIQRDNPRTSCAQRDNPRASSPNRTIQQENLRTSCTRQDNPRTSSPNRATRDNPRTSCAQRDNLRASSPIRATQQDNPRTCIQQNIPRSSSTQQDNPKTSCTKRDNLRPTCTQRDRTQSFSFQRDNPGTSSSQCCTQKENLRPSSPHRSTQWNNPRNSSPHRTNKDIPWASFPLRPTQSDGPRTSSPSRSKQSEVPWASIALRPTQGDRPQTSSPSRPAQHDPPQSSFGPTQYNLPSRATSSSHNPGHQSTSRTSSPVYPAAYGAPLTSPEPSQPPCAVCIGHRDAPRASSPPRYLQHDPFPFFPEPRAPESEPPHHEPPYIPPAVCIGHRDAPRASSPPRHTQFDPFPFLPDTSDAEHQCQSPQHEPLQLPAPVCIGYRDAPRASSPPRQAPEPSLLFQDLPRASTESLVPSMDSLHECPHIPTPVCIGHRDAPSFSSPPRQAPEPSLFFQDPPGTSMESLAPSTDSLHGSPVLIPQVCIGHRDAPRASSPPRHPPSDLAFLAPSPSPGSSGGSRGSAPPGETRHNLEREEYTVLADLPPPRRLAQRQPGPQAQCSSGGRTHSPGRAEVERLFGQERRKSEAAGAFQAQDEGRSQQPSQGQSQLLRRQSSPAPSRQVTMLPAKQAELTRRSQAEPPHPWSPEKRPEGDRQLQGSPLPPRTSARTPERELRTQRPLESGQAGPRQPLGVWQSQEEPPGSQGPHRHLERSWSSQEGGLGPGGWWGCGEPSLGAAKAPEGAWGGTSREYKESWGQPEAWEEKPTHELPRELGKRSPLTSPPENWGGPAESSQSWHSGTPTAVGWGAEGACPYPRGSERRPELDWRDLLGLLRAPGEGVWARVPSLDWEGLLELLQARLPRKDPAGHRDDLARALGPELGPPGTNDVPEQESHSQPEGWAEATPVNGHSPALQSQSPVQLPSPACTSTQWPKIKVTRGPATATLAGLEQTGPLGSRSTAKGPSLPELQFQPEEPEESEPSRGQDPLTDQKQADSADKRPAEGKAGSPLKGRLVTSWRMPGDRPTLFNPFLLSLGVLRWRRPDLLNFKKGWMSILDEPGEPPSPSLTTTSTSQWKKHWFVLTDSSLKYYRDSTAEEADELDGEIDLRSCTDVTEYAVQRNYGFQIHTKDAVYTLSAMTSGIRRNWIEALRKTVRPTSAPDVTKLSDSNKENALHSYSTQKGPLKAGEQRAGSEVISRGGPRKADGQRQALDYVELSPLTQASPQRARTPARTPDRLAKQEELERDLAQRSEERRKWFEATDSRTPEVPAGEGPRRGLGAPLTEDQQNRLSEEIEKKWQELEKLPLRENKRVPLTALLNQSRGERRGPPSDGHEALEKEVQALRAQLEAWRLQGEAPQSALRSQEDGHIPPGYISQEACERSLAEMESSHQQVMEELQRHHERELQRLQQEKEWLLAEETAATASAIEAMKKAYQEELSRELSKTRSLQQGPDGLRKQHQSDVEALKRELQVLSEQYSQKCLEIGALMRQAEEREHTLRRCQQEGQELLRHNQELHGRLSEEIDQLRGFIASQGMGNGCGRSNERSSCELEVLLRVKENELQYLKKEVQCLRDELQMMQKDKRFTSGKYQDVYVELSHIKTRSEREIEQLKEHLRLAMAALQEKESMRNSLAE.

Disordered regions lie at residues 48 to 1106 (VPYC…HEPL), 1168 to 1554 (HRDA…SERR), 1593 to 1667 (LPRK…WPKI), and 1679 to 1751 (AGLE…TSWR). Positions 132-151 (SDPTSSPDSATPDDTSNSSS) are enriched in low complexity. H221 bears the Phosphothreonine mark. Composition is skewed to polar residues over residues 239–271 (TLTQASSMTPHSGPRSTTSQASPAQRDTAQAAS), 291–375 (RASS…TPQR), 403–422 (RTSCAQRDNPKASRTSSPNR), 429–471 (RTSC…SPNR), 478–520 (RTSC…SPNR), 527–569 (RTSC…SPNR), 576–618 (RTSC…SPNR), 625–650 (RTSCAQRDNPRASSPNRTTQQDSPRT), 661–674 (SSPNRTIQQENPRT), 683–701 (RASSPSRTIQQENPRTSCA), 709–722 (SSPNRTTQQENPRT), 745–785 (RTSC…SPNR), and 807–837 (IRATQQDNPRTCIQQNIPRSSSTQQDNPKTS). Positions 324-348 (STQEDTPRASSTQWNTPRASSPSRS) are essentiel for its aggregation. Q457 bears the Phosphothreonine mark. The segment covering 839–854 (TKRDNLRPTCTQRDRT) has biased composition (basic and acidic residues). 3 stretches are compositionally biased toward polar residues: residues 855–898 (QSFS…SSPH), 913–927 (PTQSDGPRTSSPSRS), and 945–994 (DRPQ…TSSP). The segment covering 1045 to 1056 (RAPESEPPHHEP) has biased composition (basic and acidic residues). Residues 1195 to 1206 (SMESLAPSTDSL) are compositionally biased toward polar residues. Composition is skewed to basic and acidic residues over residues 1260–1270 (ETRHNLEREEY) and 1303–1319 (GRAEVERLFGQERRKSE). The span at 1332–1349 (SQQPSQGQSQLLRRQSSP) shows a compositional bias: low complexity. 2 stretches are compositionally biased toward basic and acidic residues: residues 1378-1387 (SPEKRPEGDR) and 1402-1411 (TPERELRTQR). Residues 1452-1461 (GGLGPGGWWG) are compositionally biased toward gly residues. The segment covering 1494–1508 (WEEKPTHELPRELGK) has biased composition (basic and acidic residues). Polar residues predominate over residues 1524–1534 (ESSQSWHSGTP). Basic and acidic residues predominate over residues 1594-1606 (PRKDPAGHRDDLA). Positions 1645–1664 (ALQSQSPVQLPSPACTSTQW) are enriched in polar residues. The segment covering 1696–1705 (PSLPELQFQP) has biased composition (low complexity). Residues 1724-1735 (KQADSADKRPAE) show a composition bias toward basic and acidic residues. Residues 1778-1887 (LNFKKGWMSI…WIEALRKTVR (110 aa)) form the PH domain. Position 1796 is a phosphoserine (S1796). 2 disordered regions span residues 1889 to 2017 (TSAP…LTED) and 2174 to 2194 (LSKTRSLQQGPDGLRKQHQSD). R1930 carries the post-translational modification Omega-N-methylarginine. S1949 and S1955 each carry phosphoserine. Residues 1965 to 1997 (TPDRLAKQEELERDLAQRSEERRKWFEATDSRT) show a composition bias toward basic and acidic residues. Coiled-coil stretches lie at residues 2062 to 2247 (SDGH…NQEL) and 2281 to 2361 (ELEV…SMRN).

In terms of assembly, isoform 1 forms aggregates. Isoform 1 binds to TRIO and F-actin. Isoform 1 may also interact with myosin II. Interacts with HECTD3. Interacts with PJVK. Interacts with TERF1; mediates TERF1 localization to the centrosome. Post-translationally, ubiquitinated by HECTD3, leading to its degradation by the proteasome. In terms of processing, phosphorylation at Thr-457 by PLK1 ensures mitotic progression and is essential for accurate chromosome segregation. Phosphorylation at residues Thr-221 and Thr-457 by kinase NEK2A and PLK1 coordinates TERF1 translocation from telomere to spindle pole. Widely expressed. Highly expressed in heart and placenta. As to expression, expressed in fetal brain, retina and cochlea but is not detectable in the other tissues.

It localises to the nucleus. Its subcellular location is the cytoplasm. The protein localises to the cytoskeleton. It is found in the microtubule organizing center. The protein resides in the centrosome. It localises to the midbody. Its subcellular location is the chromosome. The protein localises to the telomere. Functionally, regulates actin cytoskeletal organization, cell spreading and cell contraction by directly binding and stabilizing filamentous F-actin and prevents its depolymerization. May also serve as a linker protein to recruit proteins required for F-actin formation and turnover. Essential for correct mitotic progression. Plays a pivotal role in the formation of stereocilia rootlets. The polypeptide is TRIO and F-actin-binding protein (TRIOBP) (Homo sapiens (Human)).